A 610-amino-acid chain; its full sequence is Glutamine--fructose-6-phosphate aminotransferase [isomerizing] (610 aa).

The active-site Nucleophile; for GATase activity is the C2. A Glutamine amidotransferase type-2 domain is found at 2 to 221 (CGIVGAVAQR…DGDVVDLQLA (220 aa)). 2 consecutive SIS domains span residues 286 to 426 (AYKV…TRGR) and 459 to 600 (WADR…VDKP). The For Fru-6P isomerization activity role is filled by K605.

In terms of assembly, homodimer.

It localises to the cytoplasm. It catalyses the reaction D-fructose 6-phosphate + L-glutamine = D-glucosamine 6-phosphate + L-glutamate. In terms of biological role, catalyzes the first step in hexosamine metabolism, converting fructose-6P into glucosamine-6P using glutamine as a nitrogen source. The protein is Glutamine--fructose-6-phosphate aminotransferase [isomerizing] of Bordetella pertussis (strain Tohama I / ATCC BAA-589 / NCTC 13251).